Reading from the N-terminus, the 193-residue chain is Ion-translocating oxidoreductase complex subunit A (193 aa).

The next 6 helical transmembrane spans lie at 5–25 (LLLL…FLGL), 39–59 (IGMS…SYLV), 72–92 (LTTM…EMVV), 102–122 (LLGI…VALL), 134–154 (IIYG…FSAM), and 171–191 (AIAM…TGLV).

The protein belongs to the NqrDE/RnfAE family. The complex is composed of six subunits: RnfA, RnfB, RnfC, RnfD, RnfE and RnfG.

The protein localises to the cell inner membrane. Part of a membrane-bound complex that couples electron transfer with translocation of ions across the membrane. The polypeptide is Ion-translocating oxidoreductase complex subunit A (Colwellia psychrerythraea (strain 34H / ATCC BAA-681) (Vibrio psychroerythus)).